The primary structure comprises 759 residues: LIM domain and actin-binding protein 1 (759 aa).

M1 bears the N-acetylmethionine mark. 3 positions are modified to phosphoserine: S4, S15, and S55. The interval 78–131 (NPGLGAESHTDSLRNSSTEIRHRADHPPAEVTSHAASGAKADQEEQIHPRSRLR) is disordered. The span at 96 to 105 (EIRHRADHPP) shows a compositional bias: basic and acidic residues. Phosphoserine is present on S132. Residues 146-177 (KDGEDLKDHSTESKKMENCLGESRHEVEKSEI) are compositionally biased toward basic and acidic residues. The segment at 146–182 (KDGEDLKDHSTESKKMENCLGESRHEVEKSEISENTD) is disordered. Residues 164-166 (CLG) carry the Required for interaction with NPC1L1 motif. Phosphoserine is present on residues A183 and S225. Disordered stretches follow at residues 211–264 (ILRA…RLSE) and 323–381 (EKIS…AMKK). Y229 is modified (phosphotyrosine). A phosphoserine mark is found at S230 and S242. A compositionally biased stretch (basic and acidic residues) spans 247-258 (DSEKNESRRNLE). Phosphoserine occurs at positions 263, 343, 350, 362, 365, 369, and 374. Residues 362–376 (SPDSRASSLSESSPP) are compositionally biased toward low complexity. The 61-residue stretch at 388–448 (ETCVECQKTV…KPHFNQLFKS (61 aa)) folds into the LIM zinc-binding domain. Position 439 is an N6-succinyllysine (K439). S490 carries the phosphoserine modification. Positions 493–513 (VEDAPIAKVGVLAASMEAKAS) are required for interaction with MYO5B. The disordered stretch occupies residues 509 to 709 (EAKASSQQEK…QEPKSLNWSS (201 aa)). 2 stretches are compositionally biased toward basic and acidic residues: residues 516-527 (QEKEDKPAETKK) and 556-567 (WPPEDEISKPEV). Polar residues predominate over residues 595-607 (ASFQSTSVKSPKT). Phosphoserine is present on residues S601, S604, S609, and S617. Positions 644-655 (KNGNVGKTTWQN) are enriched in polar residues. The span at 656–673 (KESKGETGKRSKEGHSLE) shows a compositional bias: basic and acidic residues. The segment covering 674-691 (MENENLVENGADSDEDDN) has biased composition (acidic residues). Phosphoserine occurs at positions 686, 692, 698, 726, and 741. The span at 693-709 (FLKQQSPQEPKSLNWSS) shows a compositional bias: polar residues.

In terms of assembly, interacts with NPC1L1; bridges NPC1L1 with MYO5B. Interacts with MYO5B; bridges NPC1L1 with MYO5B. Interacts with PXN; this complex stabilizes actin dynamics. Interacts with F-actin and G-actin. Interacts with LUZP1 (via C-terminus); both proteins restrict ciliation and may work together to regulate this process. Binds RAB40B (GTP-bound); interaction influences LIMA1 subcellular localization in lamellipodia during cell migration. In terms of processing, ubiquitinated by the ECS(RAB40B) complex leading to its degradation. Post-translationally, phosphorylation of the C-terminal region by MAPK1/MAPK3 reduces its association with F-actin and contributes to actin filament reorganization and enhances cell motility. In terms of tissue distribution, highly expressed in placenta, kidney, pancreas, prostate, ovary, spleen and heart. Also detected in lung, liver, brain, skeletal muscle, thymus, testis and intestine. Not detected in leukocytes. Isoform Beta expressed generally at very low levels. Isoform Alpha abundant in epithelial cells from mammary gland, prostate and in normal oral keratinocytes. Low levels in aortic endothelial cells and dermal fibroblasts. Not detectable in myocardium.

The protein localises to the cytoplasm. Its subcellular location is the cell junction. It localises to the focal adhesion. The protein resides in the cytoskeleton. It is found in the stress fiber. The protein localises to the cell membrane. Its subcellular location is the cell projection. It localises to the ruffle. The protein resides in the lamellipodium. Its function is as follows. Actin-binding protein involved in actin cytoskeleton regulation and dynamics. Increases the number and size of actin stress fibers and inhibits membrane ruffling. Inhibits actin filament depolymerization. Bundles actin filaments, delays filament nucleation and reduces formation of branched filaments. Acts as a negative regulator of primary cilium formation. Plays a role in cholesterol homeostasis. Influences plasma cholesterol levels through regulation of intestinal cholesterol absorption. May act as a scaffold protein by regulating NPC1L1 transportation, an essential protein for cholesterol absorption, to the plasma membrane by recruiting MYO5B to NPC1L1, and thus facilitates cholesterol uptake. The polypeptide is LIM domain and actin-binding protein 1 (Homo sapiens (Human)).